Reading from the N-terminus, the 330-residue chain is Probable inactive heme oxygenase 2, chloroplastic (330 aa).

Composition is skewed to low complexity over residues 1–13 (MPLAAAVAASAVV) and 56–69 (AAEAEAEAVAVDEA). Disordered stretches follow at residues 1–27 (MPLAAAVAASAVVPPRPPPPPPRRARP), 50–82 (PSPPAPAAEAEAEAVAVDEAPPAKPRPRRYPRQ), and 107–156 (TTLK…LEGE). The N-terminal 47 residues, 1–47 (MPLAAAVAASAVVPPRPPPPPPRRARPLRSFTGLILTRDLAALTVAR), are a transit peptide targeting the chloroplast. Acidic residues predominate over residues 114–151 (TGAEEEVGDGVSEDASASEEEEEEEDDDDVVEEEEEGA).

Belongs to the heme oxygenase family.

It is found in the plastid. The protein localises to the chloroplast. In terms of biological role, probable inactive heme oxygenase that may play a role in the regulation of phytochrome assembly and photomorphogenesis. The polypeptide is Probable inactive heme oxygenase 2, chloroplastic (HO2) (Oryza sativa subsp. japonica (Rice)).